Consider the following 194-residue polypeptide: Histone H1.0 (194 aa).

Methionine 1 is modified (N-acetylmethionine). Residues 1 to 11 (MTENSTSTPAA) are compositionally biased toward low complexity. Residues 1–29 (MTENSTSTPAAKPKRAKASKKSTDHPKYS) are disordered. At threonine 2 the chain carries N-acetylthreonine; in Histone H1.0, N-terminally processed. The H15 domain maps to 24-97 (DHPKYSDMIV…GASGSFRLAK (74 aa)). A Citrulline modification is found at arginine 42. Positions 83 to 194 (QTKGVGASGS…SSAKRTGKKK (112 aa)) are disordered. Position 104 is an ADP-ribosylserine (serine 104). The segment covering 105–194 (VAFKKTKKEV…SSAKRTGKKK (90 aa)) has biased composition (basic residues).

It belongs to the histone H1/H5 family. Post-translationally, ADP-ribosylated on Ser-104 in response to DNA damage.

Its subcellular location is the nucleus. The protein localises to the chromosome. Histones H1 are necessary for the condensation of nucleosome chains into higher-order structures. The histones H1.0 are found in cells that are in terminal stages of differentiation or that have low rates of cell division. This Bos taurus (Bovine) protein is Histone H1.0 (H1-0).